The primary structure comprises 529 residues: GMP synthase [glutamine-hydrolyzing] (529 aa).

Residues 3-204 form the Glutamine amidotransferase type-1 domain; the sequence is TVAIVDFGSQ…FLKIAGCTRD (202 aa). Cys87 acts as the Nucleophile in catalysis. Catalysis depends on residues His179 and Glu181. Positions 205–395 constitute a GMPS ATP-PPase domain; the sequence is WTMGSFLHTQ…LGLPSAILDR (191 aa). 232-238 contributes to the ATP binding site; sequence SGGVDSS.

In terms of assembly, homodimer.

It carries out the reaction XMP + L-glutamine + ATP + H2O = GMP + L-glutamate + AMP + diphosphate + 2 H(+). It participates in purine metabolism; GMP biosynthesis; GMP from XMP (L-Gln route): step 1/1. Its function is as follows. Catalyzes the synthesis of GMP from XMP. In Anaplasma marginale (strain St. Maries), this protein is GMP synthase [glutamine-hydrolyzing].